Reading from the N-terminus, the 446-residue chain is Glutamate-1-semialdehyde 2,1-aminomutase (446 aa).

An N6-(pyridoxal phosphate)lysine modification is found at K263.

This sequence belongs to the class-III pyridoxal-phosphate-dependent aminotransferase family. HemL subfamily. It depends on pyridoxal 5'-phosphate as a cofactor.

Its subcellular location is the cytoplasm. It carries out the reaction (S)-4-amino-5-oxopentanoate = 5-aminolevulinate. Its pathway is porphyrin-containing compound metabolism; protoporphyrin-IX biosynthesis; 5-aminolevulinate from L-glutamyl-tRNA(Glu): step 2/2. The polypeptide is Glutamate-1-semialdehyde 2,1-aminomutase (Haloquadratum walsbyi (strain DSM 16790 / HBSQ001)).